The sequence spans 229 residues: Transcriptional activator protein YukR (229 aa).

The HTH luxR-type domain maps to 157 to 222 (DTSGKGILSP…QAIRLGVELE (66 aa)). A DNA-binding region (H-T-H motif) is located at residues 181–200 (YPEIALIAGITTRTVKHHMG).

It belongs to the autoinducer-regulated transcriptional regulatory protein family.

Functionally, probable transcriptional activator. Binds to an autoinducer molecule. In Yersinia ruckeri, this protein is Transcriptional activator protein YukR (yukR).